Reading from the N-terminus, the 125-residue chain is Nascent polypeptide-associated complex protein (125 aa).

The NAC-A/B domain maps to 9-76 (PRMMKQMQKM…SKNTSKTAEK (68 aa)).

It belongs to the NAC-alpha family. Homodimer. Interacts with the ribosome. Binds ribosomal RNA.

Its function is as follows. Contacts the emerging nascent chain on the ribosome. This Methanococcus vannielii (strain ATCC 35089 / DSM 1224 / JCM 13029 / OCM 148 / SB) protein is Nascent polypeptide-associated complex protein.